We begin with the raw amino-acid sequence, 497 residues long: Galactose/methyl galactoside import ATP-binding protein MglA (497 aa).

2 ABC transporter domains span residues 6-241 and 252-497; these read LEIK…VGRS and VPGE…AKYL. ATP is bound at residue 38–45; that stretch reads GENGAGKS.

The protein belongs to the ABC transporter superfamily. Galactose/methyl galactoside importer (TC 3.A.1.2.3) family. In terms of assembly, the complex is composed of one ATP-binding protein (MglA), two transmembrane proteins (MglC) and a solute-binding protein (MglB).

It localises to the cell inner membrane. The catalysed reaction is D-galactose(out) + ATP + H2O = D-galactose(in) + ADP + phosphate + H(+). The enzyme catalyses methyl beta-D-galactoside(out) + ATP + H2O = methyl beta-D-galactoside(in) + ADP + phosphate + H(+). Its function is as follows. Part of the ABC transporter complex MglABC involved in galactose/methyl galactoside import. Responsible for energy coupling to the transport system. This chain is Galactose/methyl galactoside import ATP-binding protein MglA, found in Treponema denticola (strain ATCC 35405 / DSM 14222 / CIP 103919 / JCM 8153 / KCTC 15104).